A 283-amino-acid chain; its full sequence is Polyamine aminopropyltransferase (283 aa).

The region spanning 3–236 (GIWFSELQTP…GLWAFSLGSK (234 aa)) is the PABS domain. An S-methyl-5'-thioadenosine-binding site is contributed by Gln32. Spermidine is bound by residues His63 and Asp87. Residues Glu107 and 138-139 (DG) contribute to the S-methyl-5'-thioadenosine site. Catalysis depends on Asp156, which acts as the Proton acceptor. 156–159 (DSTD) is a binding site for spermidine. An S-methyl-5'-thioadenosine-binding site is contributed by Pro163.

The protein belongs to the spermidine/spermine synthase family. As to quaternary structure, homodimer or homotetramer.

Its subcellular location is the cytoplasm. It carries out the reaction S-adenosyl 3-(methylsulfanyl)propylamine + putrescine = S-methyl-5'-thioadenosine + spermidine + H(+). It functions in the pathway amine and polyamine biosynthesis; spermidine biosynthesis; spermidine from putrescine: step 1/1. Functionally, catalyzes the irreversible transfer of a propylamine group from the amino donor S-adenosylmethioninamine (decarboxy-AdoMet) to putrescine (1,4-diaminobutane) to yield spermidine. The protein is Polyamine aminopropyltransferase of Moorella thermoacetica (strain ATCC 39073 / JCM 9320).